The sequence spans 610 residues: ATP-dependent RNA helicase HAS1 (610 aa).

2 disordered regions span residues 1–81 (MTAA…AELK) and 112–131 (ALAV…DDPT). The span at 9 to 18 (KKRKRKHKAK) shows a compositional bias: basic residues. A compositionally biased stretch (acidic residues) spans 51–76 (PEVEDVVADASENDVESGAEEDEEQV). The Q motif motif lies at 131–159 (TRFDELNLSERTMEAIKTMGFESMTEIQR). Residues 162–337 (IPPLLSGKDV…RISLKAGPLY (176 aa)) enclose the Helicase ATP-binding domain. 175–182 (AKTGSGKT) provides a ligand contact to ATP. The short motif at 285-288 (DEAD) is the DEAD box element. The Helicase C-terminal domain occupies 351–521 (GLEQGYVICD…NIQSQLEALI (171 aa)). Basic and acidic residues predominate over residues 584–594 (DKKVEGRREYG). A disordered region spans residues 584-610 (DKKVEGRREYGRQPQQGRRPMKPNKRF).

The protein belongs to the DEAD box helicase family. DDX18/HAS1 subfamily. As to quaternary structure, associates in the nucleolus with the 60S and pre-60S ribosomal subunits.

It localises to the nucleus. The protein resides in the nucleolus. The catalysed reaction is ATP + H2O = ADP + phosphate + H(+). Its function is as follows. ATP-dependent RNA helicase involved in 40S ribosomal subunit biogenesis. Required for the processing and cleavage of 35S pre-rRNA at sites A0, A1, and A2, leading to mature 18S rRNA. The polypeptide is ATP-dependent RNA helicase HAS1 (HAS1) (Phaeosphaeria nodorum (strain SN15 / ATCC MYA-4574 / FGSC 10173) (Glume blotch fungus)).